Consider the following 690-residue polypeptide: Iron-sulfur clusters transporter ATM1, mitochondrial (690 aa).

The transit peptide at 1–26 (MLLLPRCPVIGRIVRSKFRSGLIRNH) directs the protein to the mitochondrion. Topologically, residues 27-110 (SPVIFTVSKL…PKGNNKVRIR (84 aa)) are mitochondrial matrix. A helical transmembrane segment spans residues 111 to 132 (VLIALGLLISAKILNVQVPFFF). One can recognise an ABC transmembrane type-1 domain in the interval 111-401 (VLIALGLLIS…LGSVYRDLKQ (291 aa)). Over 133-155 (KQTIDSMNIAWDDPTVALPAAIG) the chain is Mitochondrial intermembrane. The chain crosses the membrane as a helical span at residues 156-179 (LTILCYGVARFGSVLFGELRNAVF). Residues 180–228 (AKVAQNAIRTVSLQTFQHLMKLDLGWHLSRQTGGLTRAMDRGTKGISQV) are Mitochondrial matrix-facing. A helical transmembrane segment spans residues 229-252 (LTAMVFHIIPISFEISVVCGILTY). Gln253 is a topological domain (mitochondrial intermembrane). The chain crosses the membrane as a helical span at residues 254-274 (FGASFAAITFSTMLLYSIFTI). The Mitochondrial matrix portion of the chain corresponds to 275-340 (KTTAWRTHFR…SQIKVSQSLA (66 aa)). Glutathione is bound by residues 280-284 (RTHFR) and 343-346 (NSGQ). A helical transmembrane segment spans residues 341-359 (FLNSGQNLIFTTALTAMMY). Topologically, residues 360-374 (MGCTGVIGGNLTVGD) are mitochondrial intermembrane. The helical transmembrane segment at 375 to 396 (LVLINQLVFQLSVPLNFLGSVY) threads the bilayer. Gly393 is a glutathione binding site. Residues 397 to 690 (RDLKQSLIDM…ENELKDQQEL (294 aa)) are Mitochondrial matrix-facing. One can recognise an ABC transporter domain in the interval 436-672 (ITFENVTFGY…PGSLYRELWT (237 aa)). ATP is bound by residues Tyr445 and 469-480 (GSSGSGKSTILK).

Belongs to the ABC transporter superfamily. ABCB family. Heavy Metal importer (TC 3.A.1.210) subfamily. As to quaternary structure, homodimer.

It is found in the mitochondrion inner membrane. Performs an essential function in the generation of cytoplasmic iron-sulfur proteins by mediating the ATP-dependent export of Fe/S cluster precursors synthesized by NFS1 and other mitochondrial proteins. Hydrolyzes ATP. Binds glutathione and may function by transporting a glutathione-conjugated iron-sulfur compound. The protein is Iron-sulfur clusters transporter ATM1, mitochondrial of Saccharomyces cerevisiae (strain ATCC 204508 / S288c) (Baker's yeast).